A 103-amino-acid polypeptide reads, in one-letter code: Large ribosomal subunit protein uL24 (103 aa).

It belongs to the universal ribosomal protein uL24 family. Part of the 50S ribosomal subunit.

Its function is as follows. One of two assembly initiator proteins, it binds directly to the 5'-end of the 23S rRNA, where it nucleates assembly of the 50S subunit. One of the proteins that surrounds the polypeptide exit tunnel on the outside of the subunit. In Oceanobacillus iheyensis (strain DSM 14371 / CIP 107618 / JCM 11309 / KCTC 3954 / HTE831), this protein is Large ribosomal subunit protein uL24.